Reading from the N-terminus, the 157-residue chain is MIILGIDPALGSLGWAVVAKETAQLKYLASGIIRTNSKDAMHHRLAFINSTLEKVILEYQPNMAAIEETFVNTNSVTSLKLGYARGAIMSLIGRYNLDMREFKPNTVKKTVTGYGHAEKDQMLHMIKLLLSGTALITNSDEADAVAIAYTCLVTKNY.

Residues D7, E67, and D140 contribute to the active site. Mg(2+) contacts are provided by D7, E67, and D140.

Belongs to the RuvC family. In terms of assembly, homodimer which binds Holliday junction (HJ) DNA. The HJ becomes 2-fold symmetrical on binding to RuvC with unstacked arms; it has a different conformation from HJ DNA in complex with RuvA. In the full resolvosome a probable DNA-RuvA(4)-RuvB(12)-RuvC(2) complex forms which resolves the HJ. It depends on Mg(2+) as a cofactor.

It localises to the cytoplasm. It catalyses the reaction Endonucleolytic cleavage at a junction such as a reciprocal single-stranded crossover between two homologous DNA duplexes (Holliday junction).. Functionally, the RuvA-RuvB-RuvC complex processes Holliday junction (HJ) DNA during genetic recombination and DNA repair. Endonuclease that resolves HJ intermediates. Cleaves cruciform DNA by making single-stranded nicks across the HJ at symmetrical positions within the homologous arms, yielding a 5'-phosphate and a 3'-hydroxyl group; requires a central core of homology in the junction. The consensus cleavage sequence is 5'-(A/T)TT(C/G)-3'. Cleavage occurs on the 3'-side of the TT dinucleotide at the point of strand exchange. HJ branch migration catalyzed by RuvA-RuvB allows RuvC to scan DNA until it finds its consensus sequence, where it cleaves and resolves the cruciform DNA. This Rickettsia rickettsii (strain Iowa) protein is Crossover junction endodeoxyribonuclease RuvC.